The primary structure comprises 390 residues: MTSTPTPTPTGALALADGSVFLGHGTGATGIALGEVCFNTAMTGHQEILADPSYAGQVVCFTFPHVGNVGANGEDEEAASPQARKAAVGMIARAKITPPASWRADTTFEEWLCTRGIVALTGIDTRALTRKIREGGMQMCAIAHDAAGNIDIEALKAAAAGAPTMEGRELAADVARTEGGDWTEGNWTLGEGYAVGPEDGPRVVVLDYGVKANILRLLTGAGARVAVLPGKASIDDIKALNPDGVVVSNGPGDPAETGKYALPTIKAVLDANIPTLGICLGHQMLALAIGAKTAKMPQGHHGANHPVKNHETGQVEIVSMNHGFAVDGTTLPANAAETHVSLFDGSNSGFKLTDKPVWAVQHHPEASPGPQDSFGVFDRFVGELKGRVEA.

The interval 1–198 (MTSTPTPTPT…LGEGYAVGPE (198 aa)) is CPSase. Positions 53, 250, and 252 each coordinate L-glutamine. In terms of domain architecture, Glutamine amidotransferase type-1 spans 202–390 (RVVVLDYGVK…VGELKGRVEA (189 aa)). Cys279 serves as the catalytic Nucleophile. Leu280, Gln283, Asn321, Gly323, and Phe324 together coordinate L-glutamine. Catalysis depends on residues His363 and Glu365.

The protein belongs to the CarA family. In terms of assembly, composed of two chains; the small (or glutamine) chain promotes the hydrolysis of glutamine to ammonia, which is used by the large (or ammonia) chain to synthesize carbamoyl phosphate. Tetramer of heterodimers (alpha,beta)4.

The enzyme catalyses hydrogencarbonate + L-glutamine + 2 ATP + H2O = carbamoyl phosphate + L-glutamate + 2 ADP + phosphate + 2 H(+). It catalyses the reaction L-glutamine + H2O = L-glutamate + NH4(+). Its pathway is amino-acid biosynthesis; L-arginine biosynthesis; carbamoyl phosphate from bicarbonate: step 1/1. It functions in the pathway pyrimidine metabolism; UMP biosynthesis via de novo pathway; (S)-dihydroorotate from bicarbonate: step 1/3. Functionally, small subunit of the glutamine-dependent carbamoyl phosphate synthetase (CPSase). CPSase catalyzes the formation of carbamoyl phosphate from the ammonia moiety of glutamine, carbonate, and phosphate donated by ATP, constituting the first step of 2 biosynthetic pathways, one leading to arginine and/or urea and the other to pyrimidine nucleotides. The small subunit (glutamine amidotransferase) binds and cleaves glutamine to supply the large subunit with the substrate ammonia. The protein is Carbamoyl phosphate synthase small chain of Maricaulis maris (strain MCS10) (Caulobacter maris).